The primary structure comprises 354 residues: Protein Wnt-11 (354 aa).

Residues 1-24 form the signal peptide; the sequence is MKPSPQFFLAAFLSLILQTGICYG. N-linked (GlcNAc...) asparagine glycans are attached at residues Asn40 and Asn90. 11 disulfides stabilise this stretch: Cys80/Cys91, Cys130/Cys138, Cys140/Cys157, Cys209/Cys223, Cys211/Cys218, Cys283/Cys314, Cys299/Cys309, Cys313/Cys353, Cys329/Cys344, Cys331/Cys341, and Cys336/Cys337. Ser215 carries O-palmitoleoyl serine; by PORCN lipidation. Asn300 and Asn304 each carry an N-linked (GlcNAc...) asparagine glycan.

Belongs to the Wnt family. Palmitoleoylation is required for efficient binding to frizzled receptors. Depalmitoleoylation leads to Wnt signaling pathway inhibition. In terms of tissue distribution, expressed in the dermatome. The expression domain is mutually exclusive to the other Wnt genes.

The protein resides in the secreted. The protein localises to the extracellular space. Its subcellular location is the extracellular matrix. Functionally, ligand for members of the frizzled family of seven transmembrane receptors. May play a role in the formation of dermal structure, both limb and feather buds. Is likely to signal over only few cell diameters. The chain is Protein Wnt-11 (WNT11) from Gallus gallus (Chicken).